The chain runs to 265 residues: MAKSRFEYVKQFERENFLLPDTYLIVRVDGKGFHKFSEEYEFSKPNDIRALKVMNNAAKNLMAQFPDIMMAYGDSDEYSFLLRRKCSLFERREMKLVSTFASFISVNYLYEWNLEFPEKQIRLERLPTFDARIVVYPTIKHIRDYFSWRQVDCHINNLYNTTFWTLVIKGGMTGREAENKLLGTVSSDKNEMLFKEFGINYNNESEIFKKGTILVREYDYTREGDDLSKRQQQRVEKQRKKASIEEYHLDIIGDTFWNERPWLLE.

Residues D29, G30, and D76 each contribute to the Mg(2+) site. GTP-binding positions include 29–34 (DGKGFH) and 75–76 (SD).

Belongs to the tRNA(His) guanylyltransferase family. Mg(2+) is required as a cofactor.

It carries out the reaction a 5'-end ribonucleotide-tRNA(His) + GTP + ATP + H2O = a 5'-end phospho-guanosine-ribonucleotide-tRNA(His) + AMP + 2 diphosphate + H(+). Adds a GMP to the 5'-end of tRNA(His) after transcription and RNase P cleavage. This Debaryomyces hansenii (strain ATCC 36239 / CBS 767 / BCRC 21394 / JCM 1990 / NBRC 0083 / IGC 2968) (Yeast) protein is tRNA(His) guanylyltransferase (THG1).